We begin with the raw amino-acid sequence, 349 residues long: Draxin (349 aa).

A signal peptide spans 1-25 (MAGPAIHTAPMLFLVLLLPLELSLA). Disordered regions lie at residues 38 to 79 (PENH…QDGA), 118 to 145 (PYPEKENRPPGWERTRKRSREHKRRRDR), and 244 to 273 (DGWPSAKKKEKHRGKLSSDGNETSPAEGEP). Residues 120 to 131 (PEKENRPPGWER) are compositionally biased toward basic and acidic residues. Composition is skewed to basic residues over residues 132–145 (TRKRSREHKRRRDR) and 249–258 (AKKKEKHRGK). Residue Asn264 is glycosylated (N-linked (GlcNAc...) asparagine).

The protein belongs to the draxin family. As to quaternary structure, interacts with LRP6.

The protein resides in the secreted. In terms of biological role, chemorepulsive axon guidance protein required for the development of spinal cord and forebrain commissures. Acts as a chemorepulsive guidance protein for commissural axons during development. Able to inhibit or repel neurite outgrowth from dorsal spinal cord. Inhibits the stabilization of cytosolic beta-catenin (CTNNB1) via its interaction with LRP6, thereby acting as an antagonist of Wnt signaling pathway. In Homo sapiens (Human), this protein is Draxin.